A 351-amino-acid chain; its full sequence is Probable aldo-keto reductase 2 (351 aa).

Tyrosine 67 acts as the Proton donor in catalysis. Histidine 134 serves as a coordination point for substrate. 213-223 (SPLGRGFFSAG) contributes to the NADP(+) binding site. Residues 317 to 351 (YASTDDVRGDRYPQAMANTTWQNSETPPLSSWKAQ) form a disordered region. Positions 332–351 (MANTTWQNSETPPLSSWKAQ) are enriched in polar residues.

It belongs to the aldo/keto reductase family.

The polypeptide is Probable aldo-keto reductase 2 (Oryza sativa subsp. japonica (Rice)).